A 286-amino-acid chain; its full sequence is Probable glucose uptake protein GlcU (286 aa).

The next 10 helical transmembrane spans lie at Ile-4–Val-22, Gly-27–Phe-49, Val-53–Gly-72, Val-85–Val-107, Trp-111–Leu-133, Ile-154–Val-176, Ala-181–Phe-198, Ile-211–Gln-228, Val-233–Leu-255, and Ile-267–Ala-284.

Belongs to the GRP transporter (TC 2.A.7.5) family.

It localises to the cell membrane. Involved in the uptake of glucose. This Bacillus cereus (strain ATCC 14579 / DSM 31 / CCUG 7414 / JCM 2152 / NBRC 15305 / NCIMB 9373 / NCTC 2599 / NRRL B-3711) protein is Probable glucose uptake protein GlcU (glcU).